The following is a 556-amino-acid chain: Polyphenol oxidase 2 (556 aa).

Residues His57, His81, His90, His250, His254, and His282 each coordinate Cu cation. The 2'-(S-cysteinyl)-histidine (Cys-His) cross-link spans 79-81; sequence CTH. Position 254 (His254) interacts with substrate. Residues 379-556 constitute a propeptide, removed in mature form; it reads SKPSSGARNT…FDDVAVHVIN (178 aa).

It belongs to the tyrosinase family. As to quaternary structure, heterotetramer. The cofactor is Cu(2+). In terms of processing, the C-ter is probably cleaved after Gly-378 since the mature active protein is smaller than the protein encoded by the gene.

It catalyses the reaction 2 L-dopa + O2 = 2 L-dopaquinone + 2 H2O. The catalysed reaction is L-tyrosine + O2 = L-dopaquinone + H2O. Its function is as follows. Copper-containing oxidase that catalyzes both the o-hydroxylation of monophenols and the subsequent oxidation of the resulting o-diphenols into reactive o-quinones, which evolve spontaneously to produce intermediates, which associate in dark brown pigments. Involved in the initial step of melanin synthesis. Melanins constitute a mechanism of defense and resistance to stress such as UV radiations, free radicals, gamma rays, dehydratation and extreme temperatures, and contribute to the fungal cell-wall resistance against hydrolytic enzymes in avoiding cellular lysis. Fungal pigments are also involved in the formation and stability of spores. This chain is Polyphenol oxidase 2 (PPO2), found in Agaricus bisporus (White button mushroom).